A 176-amino-acid polypeptide reads, in one-letter code: Tubulin polymerization-promoting protein family member 3 (176 aa).

A disordered region spans residues 126-152 (TDTSKYTGSHKERFDESGKGKGKGGRE). Positions 134–152 (SHKERFDESGKGKGKGGRE) are enriched in basic and acidic residues.

Belongs to the TPPP family.

The protein localises to the cytoplasm. It localises to the cytoskeleton. Functionally, regulator of microtubule dynamic that has microtubule bundling activity. The polypeptide is Tubulin polymerization-promoting protein family member 3 (tppp3) (Xenopus tropicalis (Western clawed frog)).